Here is a 240-residue protein sequence, read N- to C-terminus: Ribosomal RNA small subunit methyltransferase J (240 aa).

S-adenosyl-L-methionine is bound by residues 93–94 (RD) and Asp162.

This sequence belongs to the methyltransferase superfamily. RsmJ family.

The protein localises to the cytoplasm. The enzyme catalyses guanosine(1516) in 16S rRNA + S-adenosyl-L-methionine = N(2)-methylguanosine(1516) in 16S rRNA + S-adenosyl-L-homocysteine + H(+). Specifically methylates the guanosine in position 1516 of 16S rRNA. This is Ribosomal RNA small subunit methyltransferase J from Francisella philomiragia subsp. philomiragia (strain ATCC 25017 / CCUG 19701 / FSC 153 / O#319-036).